A 187-amino-acid chain; its full sequence is Ribosome-recycling factor (187 aa).

Belongs to the RRF family.

Its subcellular location is the cytoplasm. In terms of biological role, responsible for the release of ribosomes from messenger RNA at the termination of protein biosynthesis. May increase the efficiency of translation by recycling ribosomes from one round of translation to another. The polypeptide is Ribosome-recycling factor (Flavobacterium johnsoniae (strain ATCC 17061 / DSM 2064 / JCM 8514 / BCRC 14874 / CCUG 350202 / NBRC 14942 / NCIMB 11054 / UW101) (Cytophaga johnsonae)).